The sequence spans 92 residues: Nodulation protein F (92 aa).

The Carrier domain maps to 4–88 (QLTVEIIAAI…DVVEAVRGLI (85 aa)). Position 45 is an O-(pantetheine 4'-phosphoryl)serine (Ser-45).

Post-translationally, 4'-phosphopantetheine is transferred from CoA to a specific serine of apo-NodF.

Its function is as follows. Proposed to synthesize nod factor fatty acyl chain. Involved in trans-2,trans-4,trans-6,cis-11-octadecatetraenoic acid biosynthesis. In Rhizobium leguminosarum bv. trifolii, this protein is Nodulation protein F (nodF).